The sequence spans 414 residues: 3-oxo-isoapionate-4-phosphate transcarboxylase/hydrolase (414 aa).

Residues K180, D182, and E183 each coordinate Mg(2+). K180 carries the post-translational modification N6-carboxylysine.

The protein belongs to the RuBisCO large chain family. It depends on Mg(2+) as a cofactor.

It carries out the reaction 3-oxoisoapionate 4-phosphate + H2O = (2R)-3-phosphoglycerate + glycolate + H(+). Its pathway is carbohydrate metabolism. In terms of biological role, involved in catabolism of D-apiose. Catalyzes the conversion of 3-oxo-isoapionate 4-phosphate to 3-phosphoglycerate and glycolate. This chain is 3-oxo-isoapionate-4-phosphate transcarboxylase/hydrolase, found in Xanthobacter autotrophicus (strain ATCC BAA-1158 / Py2).